The sequence spans 651 residues: tRNA uridine 5-carboxymethylaminomethyl modification enzyme MnmG (651 aa).

11 to 16 is a binding site for FAD; sequence GAGHAG. Residue 296–310 participates in NAD(+) binding; the sequence is GPRYCPSIEDKIVRF.

Belongs to the MnmG family. Homodimer. Heterotetramer of two MnmE and two MnmG subunits. The cofactor is FAD.

The protein localises to the cytoplasm. Its function is as follows. NAD-binding protein involved in the addition of a carboxymethylaminomethyl (cmnm) group at the wobble position (U34) of certain tRNAs, forming tRNA-cmnm(5)s(2)U34. The polypeptide is tRNA uridine 5-carboxymethylaminomethyl modification enzyme MnmG (Chloroflexus aurantiacus (strain ATCC 29366 / DSM 635 / J-10-fl)).